The following is a 309-amino-acid chain: Ribonuclease Z (309 aa).

Positions 63, 65, 67, 68, 145, 216, and 274 each coordinate Zn(2+). Asp67 functions as the Proton acceptor in the catalytic mechanism.

It belongs to the RNase Z family. In terms of assembly, homodimer. It depends on Zn(2+) as a cofactor.

It carries out the reaction Endonucleolytic cleavage of RNA, removing extra 3' nucleotides from tRNA precursor, generating 3' termini of tRNAs. A 3'-hydroxy group is left at the tRNA terminus and a 5'-phosphoryl group is left at the trailer molecule.. In terms of biological role, zinc phosphodiesterase, which displays some tRNA 3'-processing endonuclease activity. Probably involved in tRNA maturation, by removing a 3'-trailer from precursor tRNA. The sequence is that of Ribonuclease Z from Streptococcus pneumoniae serotype 19F (strain G54).